A 196-amino-acid polypeptide reads, in one-letter code: Histone H1.0-B (196 aa).

Disordered stretches follow at residues 1 to 29 and 86 to 196; these read MAEN…PKYS and GVGA…GRKK. The region spanning 24-97 is the H15 domain; the sequence is DHPKYSDMIL…GASGSFRLAK (74 aa). The segment covering 104–196 has biased composition (basic residues); the sequence is PAKKPKKEIK…ASPKKSGRKK (93 aa).

Belongs to the histone H1/H5 family.

The protein resides in the nucleus. It localises to the chromosome. Functionally, histones H1 are necessary for the condensation of nucleosome chains into higher-order structures. The histones H1.0 are found in cells that are in terminal stages of differentiation or that have low rates of cell division. This is Histone H1.0-B (h1-0-b) from Xenopus laevis (African clawed frog).